The primary structure comprises 281 residues: 4-diphosphocytidyl-2-C-methyl-D-erythritol kinase (281 aa).

Residue K15 is part of the active site. Residue P98 to S108 participates in ATP binding. D140 is an active-site residue.

It belongs to the GHMP kinase family. IspE subfamily.

The catalysed reaction is 4-CDP-2-C-methyl-D-erythritol + ATP = 4-CDP-2-C-methyl-D-erythritol 2-phosphate + ADP + H(+). It functions in the pathway isoprenoid biosynthesis; isopentenyl diphosphate biosynthesis via DXP pathway; isopentenyl diphosphate from 1-deoxy-D-xylulose 5-phosphate: step 3/6. Functionally, catalyzes the phosphorylation of the position 2 hydroxy group of 4-diphosphocytidyl-2C-methyl-D-erythritol. The sequence is that of 4-diphosphocytidyl-2-C-methyl-D-erythritol kinase from Neisseria gonorrhoeae (strain NCCP11945).